The chain runs to 380 residues: Sterol 24-C-methyltransferase ERG6B (380 aa).

Belongs to the class I-like SAM-binding methyltransferase superfamily. Erg6/SMT family.

It catalyses the reaction lanosterol + S-adenosyl-L-methionine = eburicol + S-adenosyl-L-homocysteine + H(+). Its pathway is steroid metabolism; ergosterol biosynthesis. Functionally, sterol 24-C-methyltransferase; part of the third module of ergosterol biosynthesis pathway that includes the late steps of the pathway. ERG6A and ERG6B methylate lanosterol at C-24 to produce eburicol. The third module or late pathway involves the ergosterol synthesis itself through consecutive reactions that mainly occur in the endoplasmic reticulum (ER) membrane. Firstly, the squalene synthase ERG9 catalyzes the condensation of 2 farnesyl pyrophosphate moieties to form squalene, which is the precursor of all steroids. Squalene synthase is crucial for balancing the incorporation of farnesyl diphosphate (FPP) into sterol and nonsterol isoprene synthesis. Secondly, squalene is converted into lanosterol by the consecutive action of the squalene epoxidase ERG1 and the lanosterol synthase ERG7. Then, the delta(24)-sterol C-methyltransferase ERG6 methylates lanosterol at C-24 to produce eburicol. Eburicol is the substrate of the sterol 14-alpha demethylase encoded by CYP51A, CYP51B and CYP51C, to yield 4,4,24-trimethyl ergosta-8,14,24(28)-trienol. CYP51B encodes the enzyme primarily responsible for sterol 14-alpha-demethylation, and plays an essential role in ascospore formation. CYP51A encodes an additional sterol 14-alpha-demethylase, induced on ergosterol depletion and responsible for the intrinsic variation in azole sensitivity. The third CYP51 isoform, CYP51C, does not encode a sterol 14-alpha-demethylase, but is required for full virulence on host wheat ears. The C-14 reductase ERG24 then reduces the C14=C15 double bond which leads to 4,4-dimethylfecosterol. A sequence of further demethylations at C-4, involving the C-4 demethylation complex containing the C-4 methylsterol oxidases ERG25, the sterol-4-alpha-carboxylate 3-dehydrogenase ERG26 and the 3-keto-steroid reductase ERG27, leads to the production of fecosterol via 4-methylfecosterol. ERG28 has a role as a scaffold to help anchor ERG25, ERG26 and ERG27 to the endoplasmic reticulum. The C-8 sterol isomerase ERG2 then catalyzes the reaction which results in unsaturation at C-7 in the B ring of sterols and thus converts fecosterol to episterol. The sterol-C5-desaturases ERG3A and ERG3BB then catalyze the introduction of a C-5 double bond in the B ring to produce 5-dehydroepisterol. The C-22 sterol desaturases ERG5A and ERG5B further convert 5-dehydroepisterol into ergosta-5,7,22,24(28)-tetraen-3beta-ol by forming the C-22(23) double bond in the sterol side chain. Finally, ergosta-5,7,22,24(28)-tetraen-3beta-ol is substrate of the C-24(28) sterol reductase ERG4 to produce ergosterol. The polypeptide is Sterol 24-C-methyltransferase ERG6B (Gibberella zeae (strain ATCC MYA-4620 / CBS 123657 / FGSC 9075 / NRRL 31084 / PH-1) (Wheat head blight fungus)).